Here is an 843-residue protein sequence, read N- to C-terminus: Beta-mannosidase B (843 aa).

The active-site Proton donor is the Glu432.

Belongs to the glycosyl hydrolase 2 family. Beta-mannosidase B subfamily.

It catalyses the reaction Hydrolysis of terminal, non-reducing beta-D-mannose residues in beta-D-mannosides.. It functions in the pathway glycan metabolism; N-glycan degradation. Its function is as follows. Exoglycosidase that cleaves the single beta-linked mannose residue from the non-reducing end of beta-mannosidic oligosaccharides of various complexity and length. Prefers mannobiose over mannotriose and has no activity against polymeric mannan. Is also severely restricted by galactosyl substitutions at the +1 subsite. Releases the terminal mannose residue from mannobiose, mannotriose and galactosyl-mannotriose (GM3), but not from galactosyl-mannobiose (GM2) or di-galactosyl-mannopentaose (G2M5). In Emericella nidulans (strain FGSC A4 / ATCC 38163 / CBS 112.46 / NRRL 194 / M139) (Aspergillus nidulans), this protein is Beta-mannosidase B (mndB).